The following is a 374-amino-acid chain: Type IV secretion system protein PtlG (374 aa).

A helical transmembrane segment spans residues 38–56 (WMFALVAVALSCLLATGIW). Residues 86 to 117 (HPREPEPAPLPDMPAAPDPILPQPRPAPPVPP) are disordered. The span at 92–117 (PAPLPDMPAAPDPILPQPRPAPPVPP) shows a compositional bias: pro residues.

It belongs to the TrbI/VirB10 family.

The protein resides in the cell membrane. Functionally, component of the type IV secretion system ptl required for secretion of assembled pertussis toxin (PTX) through the outer membrane. This Bordetella pertussis (strain Tohama I / ATCC BAA-589 / NCTC 13251) protein is Type IV secretion system protein PtlG (ptlG).